Consider the following 2430-residue polypeptide: Transcription factor HIVEP2 (2430 aa).

The disordered stretch occupies residues 1–127; that stretch reads MDTGDTALGQ…SLEGPPWLFP (127 aa). 2 stretches are compositionally biased toward polar residues: residues 11 to 22 and 96 to 110; these read KATSRSGETDSV and HSLSFPQHSLSQGMT. 2 consecutive C2H2-type zinc fingers follow at residues 189-211 and 217-239; these read YICPYCSRACAKPSVLKKHIRSH and YPCIPCGFSFKTKSNLYKHRKSH. Disordered stretches follow at residues 271–302, 374–418, and 744–995; these read IHSDGEQSTDTDEESSLFAEASDKVSPGPPVP, SEKK…NTNA, and AHGH…SGKH. A compositionally biased stretch (polar residues) spans 381-418; that stretch reads SEPSLNLLSPHSKGSTDSGYFSRSESAEQQISPPNTNA. Basic and acidic residues-rich tracts occupy residues 744 to 753 and 775 to 784; these read AHGHSDRLDP and DPDKMTDLGK. The segment covering 792 to 804 has biased composition (polar residues); sequence SVIQHTNSLSRPN. S811 is modified (phosphoserine). A compositionally biased stretch (polar residues) spans 853 to 863; it reads SKPTPSQQVPQ. The span at 884–908 shows a compositional bias: basic and acidic residues; sequence RVTEEPDKPEKEKEAPTKEPEKPVE. The Nuclear localization signal motif lies at 929 to 935; that stretch reads PKKKRLR. 5 positions are modified to phosphoserine: S942, S947, S1040, S1431, and S1435. Over residues 944–974 the composition is skewed to low complexity; that stretch reads GESSFESTGTGLSRSPSQESNLSHSSSFSMS. The tract at residues 1472–1584 is disordered; the sequence is KKGLSRPQKP…GGQQEEEGKA (113 aa). 2 stretches are compositionally biased toward low complexity: residues 1499–1520 and 1560–1569; these read SRSSSFSSLSPSSSQDHPSASG and SDMSMSPQSS. C2H2-type zinc fingers lie at residues 1783-1805 and 1811-1835; these read YICEECGIRCKKPSMLKKHIRTH and YVCKLCNFAFKTKGNLTKHMKSKAH. Disordered stretches follow at residues 1848–1931 and 1986–2117; these read SVDD…SSLP and FQSK…SPRR. The span at 1850-1860 shows a compositional bias: acidic residues; that stretch reads DDTETEEAENM. Residues 1861–1871 are compositionally biased toward basic and acidic residues; that stretch reads EELHKTSEKHS. Residues 1883–1909 are compositionally biased toward acidic residues; the sequence is DAEESDGEDGDDNDDDDEDDDDFDDQG. The segment covering 1991-2001 has biased composition (basic and acidic residues); sequence TDSEPDKDRLD. A compositionally biased stretch (low complexity) spans 2013–2037; sequence SSEPSSSPRDFSPSSYRSSPGYDSS. Repeat copies occupy residues 2037–2040, 2043–2046, 2055–2058, 2067–2070, 2073–2076, 2090–2093, 2096–2099, 2102–2105, 2114–2117, and 2129–2132. A 10 X 4 AA tandem repeats of S-P-[RGMKC]-[RK] region spans residues 2037 to 2132; sequence SPCRDNSPKR…TTIRAPSPRR (96 aa). The span at 2062 to 2085 shows a compositional bias: basic and acidic residues; that stretch reads PRRDLSPMRHLSPRKEAALRREMS. S2102 is subject to Phosphoserine. Positions 2107–2116 are enriched in basic and acidic residues; the sequence is ITARRDLSPR. 3 disordered regions span residues 2226 to 2252, 2268 to 2309, and 2352 to 2430; these read PALSGLHPPPTLPLPTEGSEEKKGAPG, KQAP…QEEN, and SIRH…NQLH. The segment covering 2271–2289 has biased composition (low complexity); the sequence is PQVLQSSGLPSSPSSPRLL. Phosphoserine occurs at positions 2281 and 2285. Positions 2291–2301 are enriched in polar residues; that stretch reads KQSTSEDSLNS. Basic and acidic residues predominate over residues 2371-2380; that stretch reads PDLHDGEKDT. Residues 2406–2417 are compositionally biased toward polar residues; the sequence is FQSSKELSLSTE. Phosphoserine is present on residues S2413 and S2415.

Interacts with TCF4. Expressed in heart, lung, skeletal muscle and liver. In the brain expressed in cerebral cortex, hippocampus, corpora amygdala and cerebellar cortex.

The protein localises to the nucleus. Its function is as follows. Specifically binds to the DNA sequence 5'-GGGACTTTCC-3' which is found in the enhancer elements of numerous viral promoters such as those of SV40, CMV, or HIV1. In addition, related sequences are found in the enhancer elements of a number of cellular promoters, including those of the class I MHC, interleukin-2 receptor, somatostatin receptor II, and interferon-beta genes. It may act in T-cell activation. The sequence is that of Transcription factor HIVEP2 (Hivep2) from Mus musculus (Mouse).